The chain runs to 448 residues: Cytoplasmic tRNA 2-thiolation protein 2 (448 aa).

This sequence belongs to the CTU2/NCS2 family.

The protein resides in the cytoplasm. Its pathway is tRNA modification; 5-methoxycarbonylmethyl-2-thiouridine-tRNA biosynthesis. Plays a central role in 2-thiolation of mcm(5)S(2)U at tRNA wobble positions of tRNA(Lys), tRNA(Glu) and tRNA(Gln). May act by forming a heterodimer with NCS6 that ligates sulfur from thiocarboxylated URM1 onto the uridine of tRNAs at wobble position. Prior mcm(5) tRNA modification by the elongator complex is required for 2-thiolation. May also be involved in protein urmylation. The sequence is that of Cytoplasmic tRNA 2-thiolation protein 2 from Scheffersomyces stipitis (strain ATCC 58785 / CBS 6054 / NBRC 10063 / NRRL Y-11545) (Yeast).